Reading from the N-terminus, the 272-residue chain is Dermonecrotic toxin StSicTox-betaIF1 (272 aa).

His5 is an active-site residue. Mg(2+) contacts are provided by Glu25 and Asp27. His41 acts as the Nucleophile in catalysis. Disulfide bonds link Cys45/Cys51 and Cys47/Cys189. Position 85 (Asp85) interacts with Mg(2+).

This sequence belongs to the arthropod phospholipase D family. Class II subfamily. Mg(2+) is required as a cofactor. As to expression, expressed by the venom gland.

It is found in the secreted. It catalyses the reaction an N-(acyl)-sphingosylphosphocholine = an N-(acyl)-sphingosyl-1,3-cyclic phosphate + choline. The catalysed reaction is an N-(acyl)-sphingosylphosphoethanolamine = an N-(acyl)-sphingosyl-1,3-cyclic phosphate + ethanolamine. It carries out the reaction a 1-acyl-sn-glycero-3-phosphocholine = a 1-acyl-sn-glycero-2,3-cyclic phosphate + choline. The enzyme catalyses a 1-acyl-sn-glycero-3-phosphoethanolamine = a 1-acyl-sn-glycero-2,3-cyclic phosphate + ethanolamine. Its function is as follows. Dermonecrotic toxins cleave the phosphodiester linkage between the phosphate and headgroup of certain phospholipids (sphingolipid and lysolipid substrates), forming an alcohol (often choline) and a cyclic phosphate. This toxin acts on sphingomyelin (SM). It may also act on ceramide phosphoethanolamine (CPE), lysophosphatidylcholine (LPC) and lysophosphatidylethanolamine (LPE), but not on lysophosphatidylserine (LPS), and lysophosphatidylglycerol (LPG). It acts by transphosphatidylation, releasing exclusively cyclic phosphate products as second products. Induces dermonecrosis, hemolysis, increased vascular permeability, edema, inflammatory response, and platelet aggregation. The sequence is that of Dermonecrotic toxin StSicTox-betaIF1 from Sicarius terrosus (Cave spider).